A 53-amino-acid polypeptide reads, in one-letter code: ATP synthase protein 8 (53 aa).

The helical transmembrane segment at 10–30 threads the bilayer; sequence IMVFLVSMALLWAIMTMVFFL.

It belongs to the ATPase protein 8 family. F-type ATPases have 2 components, CF(1) - the catalytic core - and CF(0) - the membrane proton channel.

The protein resides in the mitochondrion membrane. In terms of biological role, mitochondrial membrane ATP synthase (F(1)F(0) ATP synthase or Complex V) produces ATP from ADP in the presence of a proton gradient across the membrane which is generated by electron transport complexes of the respiratory chain. F-type ATPases consist of two structural domains, F(1) - containing the extramembraneous catalytic core and F(0) - containing the membrane proton channel, linked together by a central stalk and a peripheral stalk. During catalysis, ATP synthesis in the catalytic domain of F(1) is coupled via a rotary mechanism of the central stalk subunits to proton translocation. Part of the complex F(0) domain. Minor subunit located with subunit a in the membrane. In Artemia franciscana (Brine shrimp), this protein is ATP synthase protein 8 (MT-ATP8).